Consider the following 465-residue polypeptide: Phytase A (465 aa).

The signal sequence occupies residues 1-26; it reads MVTLTFLLSAAYLLSGRVSAAPSSAG. Cysteine 30 and cysteine 39 are oxidised to a cystine. 1D-myo-inositol hexakisphosphate-binding residues include glutamine 49, tyrosine 50, arginine 80, histidine 81, arginine 84, and threonine 87. Cystine bridges form between cysteine 70-cysteine 412, cysteine 213-cysteine 463, cysteine 262-cysteine 280, and cysteine 434-cysteine 442. The active-site Nucleophile is histidine 81. The N-linked (GlcNAc...) asparagine glycan is linked to asparagine 104. Position 164 (arginine 164) interacts with 1D-myo-inositol hexakisphosphate. The N-linked (GlcNAc...) asparagine glycan is linked to asparagine 205. Aspartate 209 serves as a coordination point for 1D-myo-inositol hexakisphosphate. N-linked (GlcNAc...) asparagine glycosylation occurs at asparagine 228. A 1D-myo-inositol hexakisphosphate-binding site is contributed by lysine 299. Asparagine 337 and asparagine 350 each carry an N-linked (GlcNAc...) asparagine glycan. 2 residues coordinate 1D-myo-inositol hexakisphosphate: histidine 359 and aspartate 360. The N-linked (GlcNAc...) asparagine glycan is linked to asparagine 374.

This sequence belongs to the histidine acid phosphatase family. Monomer.

The protein localises to the secreted. It carries out the reaction 1D-myo-inositol hexakisphosphate + H2O = 1D-myo-inositol 1,2,4,5,6-pentakisphosphate + phosphate. It catalyses the reaction 1D-myo-inositol 1,2,4,5,6-pentakisphosphate + H2O = 1D-myo-inositol 1,2,5,6-tetrakisphosphate + phosphate. The catalysed reaction is 1D-myo-inositol 1,2,5,6-tetrakisphosphate + H2O = 1D-myo-inositol 1,2,6-trisphosphate + phosphate. The enzyme catalyses 1D-myo-inositol 1,2,6-trisphosphate + H2O = 1D-myo-inositol 1,2-bisphosphate + phosphate. It carries out the reaction 1D-myo-inositol 1,2-bisphosphate + H2O = 1D-myo-inositol 2-phosphate + phosphate. Functionally, catalyzes the phosphate monoester hydrolysis of phytic acid (myo-inositol hexakisphosphate), which results in the stepwise formation of myo-inositol pentakis-, tetrakis-, tris-, bis-, and monophosphates, as well as the liberation of inorganic phosphate. Myo-inositol 2-monophosphate is the end product. Has a broad substrate specificity and is also able to dephosphorylate other classic acid phosphatase substrates such as p-nitrophenyl phosphate, phenyl phosphate, fructose 1,6-bisphosphate, fructose 6-phosphate, glucose 6-phosphate, ribose 5-phosphate, alpha-glycerophosphate, beta-glycerophosphate, 3-phosphoglycerate, phosphoenolpyruvate, as well as ADP and ATP. The chain is Phytase A (phyA) from Aspergillus fumigatus (strain ATCC MYA-4609 / CBS 101355 / FGSC A1100 / Af293) (Neosartorya fumigata).